A 359-amino-acid chain; its full sequence is MLFHYLYPLHTEISFFNLFRYITFRTIYGGLTAFLICFLLGPWVINRLSRMQIGQFIQNDGPETHFEKEGTPTMGGILILFSLGVSTLLWADLTNHYILITLLSMLLFGAIGFIDDYLMQVKKRNMGFTARGKFLVQIMAGLVISYLVYLCPDFDTSLSIPFLKNFTPDLGIWYIPFATLVIVGTSNAVNLTDGLDGLAIGPIIIAGVTYMIFAYVASHITIASYLQVKHIASCGEITIVCGILAGAGLGFLWFNAHPAQVFMGDTGSIPLGAILGTIAVITKQEILLLVVGGLFVIEALSVIIQVGYFKLSKGKRVFRMAPLHHHFELKGWPESKVIVRFWIIAITLALISLSTLKIR.

Transmembrane regions (helical) follow at residues 26-46 (TIYGGLTAFLICFLLGPWVIN), 73-93 (TMGGILILFSLGVSTLLWADL), 98-118 (ILITLLSMLLFGAIGFIDDYL), 134-154 (FLVQIMAGLVISYLVYLCPDF), 166-186 (FTPDLGIWYIPFATLVIVGTS), 197-217 (GLAIGPIIIAGVTYMIFAYVA), 234-254 (CGEITIVCGILAGAGLGFLWF), 261-281 (VFMGDTGSIPLGAILGTIAVI), 286-306 (ILLLVVGGLFVIEALSVIIQV), and 338-358 (IVRFWIIAITLALISLSTLKI).

It belongs to the glycosyltransferase 4 family. MraY subfamily. It depends on Mg(2+) as a cofactor.

Its subcellular location is the cell inner membrane. It carries out the reaction UDP-N-acetyl-alpha-D-muramoyl-L-alanyl-gamma-D-glutamyl-meso-2,6-diaminopimeloyl-D-alanyl-D-alanine + di-trans,octa-cis-undecaprenyl phosphate = di-trans,octa-cis-undecaprenyl diphospho-N-acetyl-alpha-D-muramoyl-L-alanyl-D-glutamyl-meso-2,6-diaminopimeloyl-D-alanyl-D-alanine + UMP. It participates in cell wall biogenesis; peptidoglycan biosynthesis. Catalyzes the initial step of the lipid cycle reactions in the biosynthesis of the cell wall peptidoglycan: transfers peptidoglycan precursor phospho-MurNAc-pentapeptide from UDP-MurNAc-pentapeptide onto the lipid carrier undecaprenyl phosphate, yielding undecaprenyl-pyrophosphoryl-MurNAc-pentapeptide, known as lipid I. This Desulforapulum autotrophicum (strain ATCC 43914 / DSM 3382 / VKM B-1955 / HRM2) (Desulfobacterium autotrophicum) protein is Phospho-N-acetylmuramoyl-pentapeptide-transferase.